The following is a 1228-amino-acid chain: Myosin-1 (1228 aa).

Positions 1 to 27 are disordered; it reads MAVTKRAGRRAQGGTQPAKGAQGVKKA. Residues 37-716 form the Myosin motor domain; that stretch reads VGVSDLTLLS…TLFALEHMRD (680 aa). Residue 130-137 coordinates ATP; it reads GESGAGKT. A Phosphoserine modification is found at Ser358. The tract at residues 405–487 is actin-binding; the sequence is TIGILDIYGF…PGIFAALNDA (83 aa). IQ domains lie at 720–740 and 741–768; these read HNMAARIQRAWRRYLAYKTEC and AIKIQRFWRLKRGLDGLKEIQFRDSGHK. The TH1 domain maps to 776-962; sequence RRTYSLIGYR…SGSVQVPPGA (187 aa). 3 disordered regions span residues 953-1040, 1053-1109, and 1169-1228; these read SGSV…AESA, QSLV…PAAP, and QGGA…DDDW. The segment covering 1053 to 1063 has biased composition (polar residues); it reads QSLVNPRSGQG. Residues 1064 to 1092 are compositionally biased toward low complexity; that stretch reads QQQQQHHQAYQQPTAAQPAATSYSPAPAK. The segment covering 1093-1106 has biased composition (pro residues); the sequence is AAPPPPPPAPPAAP. Positions 1109–1170 constitute an SH3 domain; it reads PAEPTYKALY…PAAYLEEVQG (62 aa). A compositionally biased stretch (low complexity) spans 1180–1194; sequence PTAGGASAGASLAEA.

The protein belongs to the TRAFAC class myosin-kinesin ATPase superfamily. Myosin family. In terms of processing, phosphorylation of the TEDS site (Ser-358) is required for the polarization of the actin cytoskeleton. Phosphorylation probably activates the myosin-I ATPase activity.

Its subcellular location is the cytoplasm. It localises to the cytoskeleton. The protein localises to the actin patch. Its function is as follows. Type-I myosin implicated in the organization of the actin cytoskeleton. Required for proper actin cytoskeleton polarization. At the cell cortex, assembles in patch-like structures together with proteins from the actin-polymerizing machinery and promotes actin assembly. Functions as actin nucleation-promoting factor (NPF) for the Arp2/3 complex. The polypeptide is Myosin-1 (MYO1) (Yarrowia lipolytica (strain CLIB 122 / E 150) (Yeast)).